Consider the following 200-residue polypeptide: Small ribosomal subunit protein uS4 (200 aa).

Residues S92–L155 form the S4 RNA-binding domain.

It belongs to the universal ribosomal protein uS4 family. Part of the 30S ribosomal subunit. Contacts protein S5. The interaction surface between S4 and S5 is involved in control of translational fidelity.

In terms of biological role, one of the primary rRNA binding proteins, it binds directly to 16S rRNA where it nucleates assembly of the body of the 30S subunit. With S5 and S12 plays an important role in translational accuracy. The chain is Small ribosomal subunit protein uS4 from Shouchella clausii (strain KSM-K16) (Alkalihalobacillus clausii).